Consider the following 294-residue polypeptide: Aspartate carbamoyltransferase catalytic subunit (294 aa).

Carbamoyl phosphate-binding residues include arginine 49 and threonine 50. Lysine 77 is a binding site for L-aspartate. Carbamoyl phosphate-binding residues include arginine 99, histidine 127, and glutamine 130. 2 residues coordinate L-aspartate: arginine 161 and arginine 211. Residues glycine 250 and proline 251 each coordinate carbamoyl phosphate.

Belongs to the aspartate/ornithine carbamoyltransferase superfamily. ATCase family. Heterododecamer (2C3:3R2) of six catalytic PyrB chains organized as two trimers (C3), and six regulatory PyrI chains organized as three dimers (R2).

The enzyme catalyses carbamoyl phosphate + L-aspartate = N-carbamoyl-L-aspartate + phosphate + H(+). The protein operates within pyrimidine metabolism; UMP biosynthesis via de novo pathway; (S)-dihydroorotate from bicarbonate: step 2/3. Functionally, catalyzes the condensation of carbamoyl phosphate and aspartate to form carbamoyl aspartate and inorganic phosphate, the committed step in the de novo pyrimidine nucleotide biosynthesis pathway. The chain is Aspartate carbamoyltransferase catalytic subunit from Sulfurovum sp. (strain NBC37-1).